The primary structure comprises 813 residues: MGLPGSIVFLIMIHAFCAKKTPTNTLPSLLSLLGITDLPSLRLNILSLDGSANNQGSWVRDNTTFVYIGASSPANGVLFYMPTSHVQQMTFYKRPVSKLLASNNLIKFLNTGSYINHSFMTAMPPYRRNVQIPSDRSGLKLDDKDDAQPTGTNPPTELKNLKPIDVVNPEHRFILTSELTGTYVKHVCFVDPMDMLIPVDYAHIRTIIFGSDGAEVIMKIGITFASITISMKSAPPVELILSERARNISLIWPALKPYEPVDKFTRRPYLIYLLGPHMNASDMEIKSYINMIESVEESSNYDFQIAQTHAQLFIFAATPISDINDIYCFRVVTTRLFMSLVASVRNAFQSGYISFDEIIKTEANIKMITETLSTFALHSNPGTYFLLSGMHLRNENADIIKSLIRKTIINASKNTASLSILQHLYVLRSAYAFNISQESGNLGEHVSSISLELIIALHEESVRDTIAWNTSARHALYYAFASIFQRPPNEWDASRTARKALLFASSMCTEEHIVATELVIQEMYIKINVKNSPVHILDVYTPCVTALRMDISEHHHRLYAMSDVILHPVIEKYLENDSRGIDAEEELETKAELVITKLKTPLMRRLTIYASEVVTCSDADILEATALLVLPISGLGSYVVTRQLGIRGIVYNVDGVDVNNQLYITYVRLPCTTTAGNIVPMVLPRPLGSDCPYCGCVLLRYSTNGNLRHTIYISSQDLQRELIAGGNSSIRYFNPTIAQIYGTSLLLYPNGTIVRILAFESERVTIISATYVATATAGASIAISIAIITVRMIINNFRYNYHRYKKLSLYDDL.

Residues 1–18 form the signal peptide; that stretch reads MGLPGSIVFLIMIHAFCA. Residues 19–769 lie on the Virion surface side of the membrane; that stretch reads KKTPTNTLPS…ESERVTIISA (751 aa). Asn-62 and Asn-116 each carry an N-linked (GlcNAc...) asparagine; by host glycan. The segment at 135-159 is disordered; it reads DRSGLKLDDKDDAQPTGTNPPTELK. Positions 137–147 are enriched in basic and acidic residues; sequence SGLKLDDKDDA. Residues 212-273 form an interaction with gL region; sequence DGAEVIMKIG…FTRRPYLIYL (62 aa). 8 N-linked (GlcNAc...) asparagine; by host glycosylation sites follow: Asn-247, Asn-279, Asn-410, Asn-434, Asn-469, Asn-576, Asn-727, and Asn-750. A helical membrane pass occupies residues 770–790; the sequence is TYVATATAGASIAISIAIITV. Over 791 to 813 the chain is Intravirion; the sequence is RMIINNFRYNYHRYKKLSLYDDL.

This sequence belongs to the herpesviridae glycoprotein H family. Interacts with glycoprotein L (gL); this interaction is necessary for the correct processing and cell surface expression of gH. The heterodimer gH/gL seems to interact with gB trimers during fusion. Post-translationally, N-glycosylated, O-glycosylated, and sialylated.

Its subcellular location is the virion membrane. It localises to the host cell membrane. The protein localises to the host endosome membrane. Its function is as follows. The heterodimer glycoprotein H-glycoprotein L is required for the fusion of viral and plasma membranes leading to virus entry into the host cell. Following initial binding to host receptor, membrane fusion is mediated by the fusion machinery composed of gB and the heterodimer gH/gL. May also be involved in the fusion between the virion envelope and the outer nuclear membrane during virion morphogenesis. This chain is Envelope glycoprotein H, found in Gallus gallus (Chicken).